The primary structure comprises 448 residues: Proteases secretion protein PrtE (448 aa).

The Cytoplasmic segment spans residues 1–30 (MTGMDITTQDELNEAAMRDRASRDEERALR). A helical transmembrane segment spans residues 31–50 (LGWWLVLAGFGGFLLWALLA). The Periplasmic segment spans residues 51–448 (PLDKGVAVQG…DRMHLALTEE (398 aa)).

Belongs to the membrane fusion protein (MFP) (TC 8.A.1) family.

It localises to the cell inner membrane. In terms of biological role, involved in the secretion of proteases A, B, C and G. The sequence is that of Proteases secretion protein PrtE (prtE) from Dickeya chrysanthemi (Pectobacterium chrysanthemi).